Here is a 266-residue protein sequence, read N- to C-terminus: Glucosamine-6-phosphate deaminase (266 aa).

Asp-72 (proton acceptor; for enolization step) is an active-site residue. Asp-141 functions as the For ring-opening step in the catalytic mechanism. Residue His-143 is the Proton acceptor; for ring-opening step of the active site. The active-site For ring-opening step is Glu-148.

Belongs to the glucosamine/galactosamine-6-phosphate isomerase family. NagB subfamily. Homohexamer.

It catalyses the reaction alpha-D-glucosamine 6-phosphate + H2O = beta-D-fructose 6-phosphate + NH4(+). The protein operates within amino-sugar metabolism; N-acetylneuraminate degradation; D-fructose 6-phosphate from N-acetylneuraminate: step 5/5. With respect to regulation, allosterically activated by N-acetylglucosamine 6-phosphate (GlcNAc6P). Catalyzes the reversible isomerization-deamination of glucosamine 6-phosphate (GlcN6P) to form fructose 6-phosphate (Fru6P) and ammonium ion. This chain is Glucosamine-6-phosphate deaminase, found in Vibrio campbellii (strain ATCC BAA-1116).